Consider the following 292-residue polypeptide: Glutamyl-Q tRNA(Asp) synthetase (292 aa).

Residues 9-13 and Glu-45 contribute to the L-glutamate site; that span reads RFAPS. The short motif at 12–22 is the 'HIGH' region element; that stretch reads PSPSGPLHAGS. The Zn(2+) site is built by Cys-99, Cys-101, Tyr-121, and Cys-125. The L-glutamate site is built by Tyr-184 and Arg-202. The short motif at 240-244 is the 'KMSKS' region element; it reads KLSKQ. Lys-243 serves as a coordination point for ATP.

This sequence belongs to the class-I aminoacyl-tRNA synthetase family. GluQ subfamily. Zn(2+) is required as a cofactor.

Catalyzes the tRNA-independent activation of glutamate in presence of ATP and the subsequent transfer of glutamate onto a tRNA(Asp). Glutamate is transferred on the 2-amino-5-(4,5-dihydroxy-2-cyclopenten-1-yl) moiety of the queuosine in the wobble position of the QUC anticodon. This is Glutamyl-Q tRNA(Asp) synthetase from Verminephrobacter eiseniae (strain EF01-2).